The primary structure comprises 389 residues: Flap endonuclease 1 (389 aa).

Positions 1-105 are N-domain; the sequence is MGIKGLTALL…GELAKRKDKR (105 aa). Asp34 provides a ligand contact to Mg(2+). A DNA-binding site is contributed by Arg71. Mg(2+) contacts are provided by Asp87, Glu159, Glu161, Asp180, and Asp182. An I-domain region spans residues 123–254; the sequence is EVEKLSKRTV…KTALKLIKEH (132 aa). DNA is bound at residue Glu159. Gly232 and Asp234 together coordinate DNA. Asp234 serves as a coordination point for Mg(2+). The segment at 338–346 is interaction with PCNA; the sequence is SQNRLESFF. The tract at residues 356-389 is disordered; the sequence is IGKRKVEETKSGKGSKAGLNKKSKGVSGYKSKKT. Residues 374-389 are compositionally biased toward basic residues; sequence LNKKSKGVSGYKSKKT.

This sequence belongs to the XPG/RAD2 endonuclease family. FEN1 subfamily. Interacts with PCNA. Three molecules of FEN1 bind to one PCNA trimer with each molecule binding to one PCNA monomer. PCNA stimulates the nuclease activity without altering cleavage specificity. The cofactor is Mg(2+). Phosphorylated. Phosphorylation upon DNA damage induces relocalization to the nuclear plasma.

It is found in the nucleus. Its subcellular location is the nucleolus. The protein resides in the nucleoplasm. The protein localises to the mitochondrion. Its function is as follows. Structure-specific nuclease with 5'-flap endonuclease and 5'-3' exonuclease activities involved in DNA replication and repair. During DNA replication, cleaves the 5'-overhanging flap structure that is generated by displacement synthesis when DNA polymerase encounters the 5'-end of a downstream Okazaki fragment. It enters the flap from the 5'-end and then tracks to cleave the flap base, leaving a nick for ligation. Also involved in the long patch base excision repair (LP-BER) pathway, by cleaving within the apurinic/apyrimidinic (AP) site-terminated flap. Acts as a genome stabilization factor that prevents flaps from equilibrating into structures that lead to duplications and deletions. Also possesses 5'-3' exonuclease activity on nicked or gapped double-stranded DNA, and exhibits RNase H activity. Also involved in replication and repair of rDNA and in repairing mitochondrial DNA. The protein is Flap endonuclease 1 of Ostreococcus tauri.